We begin with the raw amino-acid sequence, 513 residues long: ATP synthase subunit alpha (513 aa).

170-177 (GDRQTGKT) is a binding site for ATP.

The protein belongs to the ATPase alpha/beta chains family. As to quaternary structure, F-type ATPases have 2 components, CF(1) - the catalytic core - and CF(0) - the membrane proton channel. CF(1) has five subunits: alpha(3), beta(3), gamma(1), delta(1), epsilon(1). CF(0) has four main subunits: a(1), b(1), b'(1) and c(9-12).

Its subcellular location is the cell inner membrane. It carries out the reaction ATP + H2O + 4 H(+)(in) = ADP + phosphate + 5 H(+)(out). In terms of biological role, produces ATP from ADP in the presence of a proton gradient across the membrane. The alpha chain is a regulatory subunit. The polypeptide is ATP synthase subunit alpha (Gloeobacter violaceus (strain ATCC 29082 / PCC 7421)).